The chain runs to 170 residues: ATP synthase F(1) complex subunit delta, mitochondrial (170 aa).

Residues 1–33 (MIRSIIKSSNNLLKSNVAINSNKRFFATEASAT) constitute a mitochondrion transit peptide.

This sequence belongs to the ATPase epsilon chain family. In terms of assembly, component of the ATP synthase complex composed at least of ATP5F1A/subunit alpha, ATP5F1B/subunit beta, ATP5MC1/subunit c (homooctomer), MT-ATP6/subunit a, MT-ATP8/subunit 8, ATP5ME/subunit e, ATP5MF/subunit f, ATP5MG/subunit g, ATP5MK/subunit k, ATP5MJ/subunit j, ATP5F1C/subunit gamma, ATP5F1D/subunit delta, ATP5F1E/subunit epsilon, ATP5PF/subunit F6, ATP5PB/subunit b, ATP5PD/subunit d, ATP5PO/subunit OSCP. ATP synthase complex consists of a soluble F(1) head domain (subunits alpha(3) and beta(3)) - the catalytic core - and a membrane F(0) domain - the membrane proton channel (subunits c, a, 8, e, f, g, k and j). These two domains are linked by a central stalk (subunits gamma, delta, and epsilon) rotating inside the F1 region and a stationary peripheral stalk (subunits F6, b, d, and OSCP).

The protein localises to the mitochondrion. The protein resides in the mitochondrion inner membrane. Its function is as follows. Subunit delta, of the mitochondrial membrane ATP synthase complex (F(1)F(0) ATP synthase or Complex V) that produces ATP from ADP in the presence of a proton gradient across the membrane which is generated by electron transport complexes of the respiratory chain. ATP synthase complex consist of a soluble F(1) head domain - the catalytic core - and a membrane F(1) domain - the membrane proton channel. These two domains are linked by a central stalk rotating inside the F(1) region and a stationary peripheral stalk. During catalysis, ATP synthesis in the catalytic domain of F(1) is coupled via a rotary mechanism of the central stalk subunits to proton translocation. In vivo, can only synthesize ATP although its ATP hydrolase activity can be activated artificially in vitro. With the central stalk subunit gamma, is essential for the biogenesis of F(1) catalytic part of the ATP synthase complex namely in the formation of F1 assembly intermediate. The polypeptide is ATP synthase F(1) complex subunit delta, mitochondrial (Dictyostelium discoideum (Social amoeba)).